The following is a 543-amino-acid chain: Tetrahydroberberine oxidase (543 aa).

A signal peptide spans 1–26 (MIPNSSSSSILSLLVLLLFSTSSSWA). Cysteines 37 and 97 form a disulfide. N54, N74, N135, N142, N162, N295, N335, N440, and N482 each carry an N-linked (GlcNAc...) asparagine glycan. The 176-residue stretch at 75–250 (STQKPEFIIT…LSWKVKLVPV (176 aa)) folds into the FAD-binding PCMH-type domain. The segment at residues 112–175 (HDVEGLSYVS…NTLGFPAGFC (64 aa)) is a cross-link (6-(S-cysteinyl)-8alpha-(pros-histidyl)-FAD (His-Cys)).

This sequence belongs to the oxygen-dependent FAD-linked oxidoreductase family. FAD is required as a cofactor. The FAD cofactor is bound via a bicovalent 6-S-cysteinyl, 8alpha-N1-histidyl FAD linkage.

It catalyses the reaction (S)-canadine + 2 O2 + H(+) = berberine + 2 H2O2. In terms of biological role, catalyzes the oxidation of different tetrahydroprotoberberines, such as (S)-canadine, (S)-scoulerine and (S)-tetrahydropalmatine. This chain is Tetrahydroberberine oxidase, found in Argemone mexicana (Mexican prickly poppy).